Here is a 544-residue protein sequence, read N- to C-terminus: Membrane protein insertase YidC (544 aa).

A run of 5 helical transmembrane segments spans residues 15–35, 321–341, 343–363, 409–429, and 506–526; these read LFLIGLFMLINDIFSSIMLSF, LWYLIQVPMQMVMQVFYDVIP, WGLSIIFLTIVVRILIFPLTF, LGGCFPVILQLPIFFALYSLV, and MPIMFFFILYNMPSGLLIYWI.

This sequence belongs to the OXA1/ALB3/YidC family. Type 1 subfamily. As to quaternary structure, interacts with the Sec translocase complex via SecD. Specifically interacts with transmembrane segments of nascent integral membrane proteins during membrane integration.

It localises to the cell inner membrane. In terms of biological role, required for the insertion and/or proper folding and/or complex formation of integral membrane proteins into the membrane. Involved in integration of membrane proteins that insert both dependently and independently of the Sec translocase complex, as well as at least some lipoproteins. Aids folding of multispanning membrane proteins. This chain is Membrane protein insertase YidC, found in Borrelia garinii subsp. bavariensis (strain ATCC BAA-2496 / DSM 23469 / PBi) (Borreliella bavariensis).